The sequence spans 1396 residues: MFREGSRDDAALVKEGLFDKLEIGIASDVTIRDKWSCGEIKKPETINYRTFKPEKGGLFCEKIFGPTKDWECYCGKYKKIKHKGIVCDRCGVEVTLSKVRRERMAHIELAVPIVHIWFFKTTPSRIGNVLGMTASDLERVIYYEEYVVIDPGNTDLVKKQLLNDAKYREVVEKWGKDAFVAKMGGEAVYDLLKSEDLESLLGELKDRLRKTKSQQARMKLAKRLKIVEGFVSSSNRPEWMVLKNIPVVPPDLRPLVPLDGGRFATSDLNDLYRRVINRNNRLKAILRLKTPEVIVRNEKRMLQEAVDALFDNGRHGHPVMGAGNRPLKSLSEMLKGKNGRFRQNLLGKRVDYSGRSVIIVGPELKFNQCGLPKEMALELFEPFIIKRLKDQGSVYTIRSAKKMIQRGAPEVWDVLEEIIKGHPVLLNRAPTLHRLGIQAFEPVLIEGKAIRVHPLVCAAFNADFDGDQMAVHVPLSIEAQLEAKVLMMAPDNIFLPSSGKPVATPSKDMTLGIYYLMADPTYFPEEHGGKTKAFKDEVEVLRALNAGGFILKDEICGSRRDETGRGIHIHEKIKVRIDGQIIETTPGRVFFNTIVPKELGFQNYSMPSKRISELILQCYKKVGLEATVRFLDDLKELGFVQSTKAAISMGLKDVKIPEIKKEILKDAYDKVAIVKKQYEDGIITDGERHSKTISIWTEVSDLLSNALYSEIKKQTNSKHNPLFLMVDSGARGNKSQLKQLGALRGLMAKPNGAIIESPITSNFREGLTVLEYSISSHGARKGLADTALKTADSGYLTRRLVDVAQDVIITERDCGTLNHIEVSTIRQGSEELLPLKDRVYGRTVSENIYQPGDKSNVLAYAGDVLTSAQAEAIDDAGIESVKIRSTLTCESRRGVCAKCYGLNLANGHLIGLGEAVGIIAAQSIGEPGTQLTMRTFHLGGVAATSSTPEIVAECDGILVYLDLRVVVDQEGNNLVLNKMGALHLVQDEGRSLSEYKKLLSTKSIESLATFPVELGAKILVNDGAAVTAGQRIAEVELHNIPIICDKPGFVHYEDLVEGVSTEKVANKNTGLVELIVKQHRGELHPQIAIYADANMKELVGTYAIPSGAIISVEEGQRIAPGMLLARLPRGAIKTKDITGGLPRVAELVEARKPEDAADIAKIDGVVDFKGIQKNKRILVVRDEITGMEEEHLISLTKHLIVQRGDSVIKGQQLTDGLVVPHEILAICGVRELQKYLVNEVQEVYRLQGVDINDKHIEIIVRQMLQKVRITDPGDTTLLFGEDVDKKEFYEENRRTEEDGGKPAQAVPVLLGITKASLGTESFISAASFQDTTRVLTDAACSSKTDYLLGFKENVIMGHMIPGGTGFDTHKRIKQYLEKEQEDLVFDFDSEFESVAG.

Residues Cys-72, Cys-74, Cys-87, and Cys-90 each coordinate Zn(2+). The Mg(2+) site is built by Asp-463, Asp-465, and Asp-467. The Zn(2+) site is built by Cys-814, Cys-889, Cys-896, and Cys-899.

It belongs to the RNA polymerase beta' chain family. As to quaternary structure, the RNAP catalytic core consists of 2 alpha, 1 beta, 1 beta' and 1 omega subunit. When a sigma factor is associated with the core the holoenzyme is formed, which can initiate transcription. Mg(2+) serves as cofactor. Requires Zn(2+) as cofactor.

The enzyme catalyses RNA(n) + a ribonucleoside 5'-triphosphate = RNA(n+1) + diphosphate. Its function is as follows. DNA-dependent RNA polymerase catalyzes the transcription of DNA into RNA using the four ribonucleoside triphosphates as substrates. The sequence is that of DNA-directed RNA polymerase subunit beta' from Chlamydia trachomatis serovar L2b (strain UCH-1/proctitis).